A 274-amino-acid polypeptide reads, in one-letter code: Large ribosomal subunit protein uL2 (274 aa).

A disordered region spans residues 224–274 (VAMNPVDHPHGGGEGRTSGGRHPVTPWGIPTKGYKTRKNKRSNKLIVQKRK). Basic residues predominate over residues 257–274 (YKTRKNKRSNKLIVQKRK).

It belongs to the universal ribosomal protein uL2 family. In terms of assembly, part of the 50S ribosomal subunit. Forms a bridge to the 30S subunit in the 70S ribosome.

Its function is as follows. One of the primary rRNA binding proteins. Required for association of the 30S and 50S subunits to form the 70S ribosome, for tRNA binding and peptide bond formation. It has been suggested to have peptidyltransferase activity; this is somewhat controversial. Makes several contacts with the 16S rRNA in the 70S ribosome. The chain is Large ribosomal subunit protein uL2 from Francisella philomiragia subsp. philomiragia (strain ATCC 25017 / CCUG 19701 / FSC 153 / O#319-036).